The primary structure comprises 368 residues: DNA replication and repair protein RecF (368 aa).

30-37 (GNNAQGKT) provides a ligand contact to ATP.

The protein belongs to the RecF family.

It localises to the cytoplasm. Its function is as follows. The RecF protein is involved in DNA metabolism; it is required for DNA replication and normal SOS inducibility. RecF binds preferentially to single-stranded, linear DNA. It also seems to bind ATP. This Streptococcus pyogenes serotype M18 (strain MGAS8232) protein is DNA replication and repair protein RecF.